The following is a 299-amino-acid chain: MKRAHPDYSSSDSELDETIEVEKESADENGNLSSALCSMSPTTSSQVLARKRRRGIIEKRRRDRINNSLSELRRLVPSAFEKQGSAKLEKAEILQMTVDHLKMLHTAGGKGYFDAHALAMDYRSLGFRECLAEVARYLSIIEGLDASDPLLVRLVSHLNNYASQREAASGAHGGLGHIPWGSAFGHHPHIAHPLLLPQNGHGNAGTAASPTEPHHQGRLASAHPEAPALRAPPSGGLGPVLPVVTSASKLSPPLLSSVASLSAFPFSFSSFHLLSPSTPTQAANLGKPYRPWGTEIGAF.

Residues 1-53 (MKRAHPDYSSSDSELDETIEVEKESADENGNLSSALCSMSPTTSSQVLARKRR) form a disordered region. Polar residues predominate over residues 28-47 (ENGNLSSALCSMSPTTSSQV). The tract at residues 48–117 (LARKRRRGII…GGKGYFDAHA (70 aa)) is transcriptional repression and interaction with NCOR1 and SIN3A. The bHLH domain maps to 49–104 (ARKRRRGIIEKRRRDRINNSLSELRRLVPSAFEKQGSAKLEKAEILQMTVDHLKML). Residues 122–158 (YRSLGFRECLAEVARYLSIIEGLDASDPLLVRLVSHL) form the Orange domain. The interval 194 to 234 (LLLPQNGHGNAGTAASPTEPHHQGRLASAHPEAPALRAPPS) is disordered. The short motif at 289–292 (YRPW) is the YRPW motif element.

This sequence belongs to the HEY family. May self-associate. Interacts with HES1, NCOR1 and SIN3A. Interacts with GATA4, GATA6 and HDAC1 and HEYL. Interacts with CCDC89/BOIP. As to expression, expressed in somitic mesoderm, brain, central nervous system, kidney, heart, nasal epithelium, limbs, lung, muscle, ovary and testis.

The protein localises to the nucleus. Transcriptional repressor which binds preferentially to the canonical E box sequence 5'-CACGTG-3'. Downstream effector of Notch signaling required for cardiovascular development. Specifically required for the Notch-induced endocardial epithelial to mesenchymal transition, which is itself criticial for cardiac valve and septum development. May be required in conjunction with HEY2 to specify arterial cell fate or identity. Promotes maintenance of neuronal precursor cells and glial versus neuronal fate specification. Represses transcription by the cardiac transcriptional activators GATA4 and GATA6 and by the neuronal bHLH factors ASCL1/MASH1 and NEUROD4/MATH3. In Mus musculus (Mouse), this protein is Hairy/enhancer-of-split related with YRPW motif protein 1 (Hey1).